A 377-amino-acid polypeptide reads, in one-letter code: MFNPHALDSPAVIFDNGSGLCKAGLSGEFGPRHIVSSIVGHLKFQAPSAGANQKKYFVGEEALYKLEALQLHSPIERGLITGWDDMERLWKHLFEWELGVKPSDQPLLATEPSLNPRENREKMAEVMFENFGVPAFYLSDQAVLALYASACVTGLVVDSGDGVTCTVPIFEGYSLPHAVTKLHVAGRDITELLTQLLLASGHTFSCELDKGLVDDIKKKLCYVALEPEKELSRRPEEVLREYKLPDGNIISLGDPLCQAPEALFAPQQLGCQSPGLSHMVSSSITKCDADIQKILFGEIVLSGGTTLFHGLDDRLLKELEQLASKDTPIKITAPPDRWFSTWIGASIVTSLSSFKQMWVTAADFKEFGSSVVQRRCF.

Belongs to the actin family.

The protein resides in the cytoplasm. Its subcellular location is the cytoskeleton. The sequence is that of Actin-related protein T2 (ACTRT2) from Macaca fascicularis (Crab-eating macaque).